A 131-amino-acid polypeptide reads, in one-letter code: MSEQKPEQDVNKKIEELEKKVQELQEQLEKTKQAVKTVASILDNHLKGQWTLEDVKIAITHINEMVQLLTQSGIIRPGSEGSGNWLQMMLAQQFMQQKQAQQSQDVQIEPLKKKNKKKLKKFLDEEAEEEE.

Residues 4–44 (QKPEQDVNKKIEELEKKVQELQEQLEKTKQAVKTVASILDN) adopt a coiled-coil conformation.

This is an uncharacterized protein from Sulfolobus islandicus filamentous virus (isolate Iceland/Hveragerdi) (SIFV).